Here is a 221-residue protein sequence, read N- to C-terminus: Translation initiation factor 6 (221 aa).

This sequence belongs to the eIF-6 family.

In terms of biological role, binds to the 50S ribosomal subunit and prevents its association with the 30S ribosomal subunit to form the 70S initiation complex. The sequence is that of Translation initiation factor 6 from Halorubrum lacusprofundi (strain ATCC 49239 / DSM 5036 / JCM 8891 / ACAM 34).